The following is a 493-amino-acid chain: Transcript termination protein A18 (493 aa).

The Helicase ATP-binding domain occupies 100–256 (MIESKRPLYI…NSIINIAKLS (157 aa)). 113–120 (LACGFGKT) contacts ATP. A DESH box motif is present at residues 206-209 (DESH).

The protein belongs to the helicase family. Poxviruses subfamily. As to quaternary structure, interacts with G2. Might be part of a transcription complex composed at least of G2, A18, and H5.

The protein resides in the virion. Functionally, DNA helicase which seems to act as a postreplicative transcription termination factor. Involved in ATP-dependent release of nascent RNA. Forms a stable complex with single-stranded DNA, and to a lesser extent RNA. The sequence is that of Transcript termination protein A18 from Vaccinia virus (strain Tian Tan) (VACV).